We begin with the raw amino-acid sequence, 1218 residues long: Formin-A (1218 aa).

Residues 1–108 form the C2 domain; the sequence is MADKLYQIKL…ILGEACNYSV (108 aa). The GBD/FH3 domain occupies 139 to 539; the sequence is EEKKRHDEIQ…QISLRDKNIG (401 aa). Positions 563–638 form a coiled coil; sequence LKSQIESLKK…QLKLTQGTAK (76 aa). A disordered region spans residues 634–762; it reads QGTAKPDSAA…KAAAPPRKEV (129 aa). Residues 649 to 747 show a composition bias toward pro residues; sequence APPPPPPPMT…FGKGPPPPPG (99 aa). The FH1 domain maps to 652-737; it reads PPPPPMTGGG…AGGPPPPPPP (86 aa). The FH2 domain maps to 759–1155; the sequence is RKEVPVPALK…IAKREAAKKL (397 aa). Residues 1034–1061 are a coiled coil; that stretch reads SLSQVQAEVATLRKEFVQVQKSIETLNS. Disordered stretches follow at residues 1153-1179 and 1198-1218; these read KKLK…TVEV and KNRR…PIDL. Residues 1174–1209 enclose the DAD domain; sequence GETVEVKESVVDDLLDTIASGDAFKNRRRRARKTDQ.

The protein belongs to the formin homology family. Diaphanous subfamily. Interacts (via GBD/FH3 domain) with activated Rho-GTPases.

Formins play an important role in the nucleation of actin and the formation of linear actin filaments. This is Formin-A (forA) from Dictyostelium discoideum (Social amoeba).